A 125-amino-acid polypeptide reads, in one-letter code: Translation initiation factor 5A (125 aa).

A Hypusine modification is found at lysine 35.

The protein belongs to the eIF-5A family.

The protein localises to the cytoplasm. Functions by promoting the formation of the first peptide bond. The sequence is that of Translation initiation factor 5A (eIF5A) from Methanoregula boonei (strain DSM 21154 / JCM 14090 / 6A8).